The primary structure comprises 219 residues: Chloramphenicol acetyltransferase (219 aa).

Catalysis depends on His190, which acts as the Proton acceptor.

It belongs to the chloramphenicol acetyltransferase family. In terms of assembly, homotrimer.

The catalysed reaction is chloramphenicol + acetyl-CoA = chloramphenicol 3-acetate + CoA. In terms of biological role, this enzyme is an effector of chloramphenicol resistance in bacteria. The sequence is that of Chloramphenicol acetyltransferase (catB) from Clostridium butyricum.